The primary structure comprises 226 residues: ATP synthase F(0) complex subunit a (226 aa).

The next 6 membrane-spanning stretches (helical) occupy residues 11 to 31 (APTI…TLLI), 68 to 88 (WSLM…LGLL), 97 to 117 (QLSM…ITGL), 138 to 158 (IPML…ALAV), 164 to 184 (ITAG…LSTI), and 194 to 214 (VLLM…AYVF).

This sequence belongs to the ATPase A chain family. As to quaternary structure, component of the ATP synthase complex composed at least of ATP5F1A/subunit alpha, ATP5F1B/subunit beta, ATP5MC1/subunit c (homooctomer), MT-ATP6/subunit a, MT-ATP8/subunit 8, ATP5ME/subunit e, ATP5MF/subunit f, ATP5MG/subunit g, ATP5MK/subunit k, ATP5MJ/subunit j, ATP5F1C/subunit gamma, ATP5F1D/subunit delta, ATP5F1E/subunit epsilon, ATP5PF/subunit F6, ATP5PB/subunit b, ATP5PD/subunit d, ATP5PO/subunit OSCP. ATP synthase complex consists of a soluble F(1) head domain (subunits alpha(3) and beta(3)) - the catalytic core - and a membrane F(0) domain - the membrane proton channel (subunits c, a, 8, e, f, g, k and j). These two domains are linked by a central stalk (subunits gamma, delta, and epsilon) rotating inside the F1 region and a stationary peripheral stalk (subunits F6, b, d, and OSCP). Interacts with DNAJC30; interaction is direct.

It is found in the mitochondrion inner membrane. The enzyme catalyses H(+)(in) = H(+)(out). Functionally, subunit a, of the mitochondrial membrane ATP synthase complex (F(1)F(0) ATP synthase or Complex V) that produces ATP from ADP in the presence of a proton gradient across the membrane which is generated by electron transport complexes of the respiratory chain. ATP synthase complex consist of a soluble F(1) head domain - the catalytic core - and a membrane F(1) domain - the membrane proton channel. These two domains are linked by a central stalk rotating inside the F(1) region and a stationary peripheral stalk. During catalysis, ATP synthesis in the catalytic domain of F(1) is coupled via a rotary mechanism of the central stalk subunits to proton translocation. With the subunit c (ATP5MC1), forms the proton-conducting channel in the F(0) domain, that contains two crucial half-channels (inlet and outlet) that facilitate proton movement from the mitochondrial intermembrane space (IMS) into the matrix. Protons are taken up via the inlet half-channel and released through the outlet half-channel, following a Grotthuss mechanism. This chain is ATP synthase F(0) complex subunit a, found in Papio hamadryas (Hamadryas baboon).